A 267-amino-acid chain; its full sequence is Hydrolase FUB4 (267 aa).

Active-site charge relay system residues include S93, D183, and H243.

This sequence belongs to the AB hydrolase 3 family.

It functions in the pathway mycotoxin biosynthesis. Functionally, hydrolase; part of the gene cluster that mediates the biosynthesis of fusaric acid, a mycotoxin with low to moderate toxicity to animals and humans, but with high phytotoxic properties. L-aspartate is suggested as fusaric acid amino acid precursor that is activated and further processed to O-acetyl-L-homoserine by cluster enzymes aspartate kinase FUB3 and homoserine O-acetyltransferase FUB5, as well as enzymes of the primary metabolism. The polyketide synthase (PKS) FUB1 generates the triketide trans-2-hexenal which is presumptively released by the hydrolase FUB4 and linked to the NRPS-bound amino acid precursor by NAD(P)-dependent dehydrogenase FUB6. FUB1, FUB4, and the non-canonical NRPS Fub8 may form an enzyme complex. Further processing of the NRPS-bound intermediate might be carried out by FUB6 and the sulfhydrylase FUB7, enabling a spontaneous electrocyclization to close the carbon backbone of fusaric acid. Dihydrofusaric acid is likely to be released via reduction by the thioester reductase (TR) domain of FUB8 whereupon the final oxidation to fusaric acid may (also) be performed by the FMN-dependent dehydrogenase FUB9. This Gibberella moniliformis (strain M3125 / FGSC 7600) (Maize ear and stalk rot fungus) protein is Hydrolase FUB4.